Consider the following 175-residue polypeptide: Ribosome maturation factor RimM (175 aa).

In terms of domain architecture, PRC barrel spans 97 to 170 (NGQYYWTDVL…YLYVDWQMAW (74 aa)).

It belongs to the RimM family. Binds ribosomal protein uS19.

Its subcellular location is the cytoplasm. Functionally, an accessory protein needed during the final step in the assembly of 30S ribosomal subunit, possibly for assembly of the head region. Essential for efficient processing of 16S rRNA. May be needed both before and after RbfA during the maturation of 16S rRNA. It has affinity for free ribosomal 30S subunits but not for 70S ribosomes. The polypeptide is Ribosome maturation factor RimM (Dichelobacter nodosus (strain VCS1703A)).